The chain runs to 311 residues: Ribonuclease 3 (311 aa).

The RNase III domain maps to 20–145 (YLCFYRILGF…FIGAIYLDQG (126 aa)). Residue glutamate 62 coordinates Mg(2+). Residue aspartate 66 is part of the active site. Residues asparagine 131 and glutamate 134 each contribute to the Mg(2+) site. Glutamate 134 is a catalytic residue. Residues 173 to 242 (NFKSKLIEWS…AQMAIKKVKD (70 aa)) enclose the DRBM domain. A disordered region spans residues 250-311 (NEAKSQHSKP…EVEATETEKE (62 aa)). The segment covering 262-288 (VETESVEPELTESETMEPDTLETEAPE) has biased composition (acidic residues).

Belongs to the ribonuclease III family. Homodimer. The cofactor is Mg(2+).

The protein localises to the cytoplasm. It carries out the reaction Endonucleolytic cleavage to 5'-phosphomonoester.. Functionally, digests double-stranded RNA. Involved in the processing of primary rRNA transcript to yield the immediate precursors to the large and small rRNAs (23S and 16S). Processes some mRNAs, and tRNAs when they are encoded in the rRNA operon. Processes pre-crRNA and tracrRNA of type II CRISPR loci if present in the organism. This chain is Ribonuclease 3, found in Bacteroides thetaiotaomicron (strain ATCC 29148 / DSM 2079 / JCM 5827 / CCUG 10774 / NCTC 10582 / VPI-5482 / E50).